A 206-amino-acid chain; its full sequence is Glycerol-3-phosphate acyltransferase (206 aa).

5 helical membrane-spanning segments follow: residues 14-34 (IALAAAVIGYLLGSIPFGLIL), 67-87 (ATLLLDALKASAAAWIVGYFL), 91-111 (AAIIAGFFAFIGHLFPVWIGF), 124-144 (LLGVAPIMVVLFAAVWLAVAV), and 148-168 (YSSLSALVAMLVIPVALLILG).

The protein belongs to the PlsY family. Probably interacts with PlsX.

The protein resides in the cell inner membrane. It carries out the reaction an acyl phosphate + sn-glycerol 3-phosphate = a 1-acyl-sn-glycero-3-phosphate + phosphate. Its pathway is lipid metabolism; phospholipid metabolism. Its function is as follows. Catalyzes the transfer of an acyl group from acyl-phosphate (acyl-PO(4)) to glycerol-3-phosphate (G3P) to form lysophosphatidic acid (LPA). This enzyme utilizes acyl-phosphate as fatty acyl donor, but not acyl-CoA or acyl-ACP. In Rhizobium etli (strain ATCC 51251 / DSM 11541 / JCM 21823 / NBRC 15573 / CFN 42), this protein is Glycerol-3-phosphate acyltransferase.